Consider the following 236-residue polypeptide: 7-cyano-7-deazaguanine synthase (236 aa).

7–17 (CSGGLDSVTLA) lines the ATP pocket. Residues cysteine 185, cysteine 193, cysteine 196, and cysteine 199 each contribute to the Zn(2+) site.

It belongs to the QueC family. Zn(2+) serves as cofactor.

The enzyme catalyses 7-carboxy-7-deazaguanine + NH4(+) + ATP = 7-cyano-7-deazaguanine + ADP + phosphate + H2O + H(+). The protein operates within purine metabolism; 7-cyano-7-deazaguanine biosynthesis. Catalyzes the ATP-dependent conversion of 7-carboxy-7-deazaguanine (CDG) to 7-cyano-7-deazaguanine (preQ(0)). The chain is 7-cyano-7-deazaguanine synthase from Rhizobium johnstonii (strain DSM 114642 / LMG 32736 / 3841) (Rhizobium leguminosarum bv. viciae).